A 217-amino-acid polypeptide reads, in one-letter code: Phosphatidylserine decarboxylase proenzyme (217 aa).

S182 (schiff-base intermediate with substrate; via pyruvic acid) is an active-site residue. S182 is subject to Pyruvic acid (Ser); by autocatalysis.

This sequence belongs to the phosphatidylserine decarboxylase family. PSD-A subfamily. As to quaternary structure, heterodimer of a large membrane-associated beta subunit and a small pyruvoyl-containing alpha subunit. Pyruvate serves as cofactor. Is synthesized initially as an inactive proenzyme. Formation of the active enzyme involves a self-maturation process in which the active site pyruvoyl group is generated from an internal serine residue via an autocatalytic post-translational modification. Two non-identical subunits are generated from the proenzyme in this reaction, and the pyruvate is formed at the N-terminus of the alpha chain, which is derived from the carboxyl end of the proenzyme. The post-translation cleavage follows an unusual pathway, termed non-hydrolytic serinolysis, in which the side chain hydroxyl group of the serine supplies its oxygen atom to form the C-terminus of the beta chain, while the remainder of the serine residue undergoes an oxidative deamination to produce ammonia and the pyruvoyl prosthetic group on the alpha chain.

The protein resides in the cell membrane. The catalysed reaction is a 1,2-diacyl-sn-glycero-3-phospho-L-serine + H(+) = a 1,2-diacyl-sn-glycero-3-phosphoethanolamine + CO2. It functions in the pathway phospholipid metabolism; phosphatidylethanolamine biosynthesis; phosphatidylethanolamine from CDP-diacylglycerol: step 2/2. Functionally, catalyzes the formation of phosphatidylethanolamine (PtdEtn) from phosphatidylserine (PtdSer). The chain is Phosphatidylserine decarboxylase proenzyme from Prosthecochloris aestuarii (strain DSM 271 / SK 413).